The sequence spans 386 residues: 1-deoxy-D-xylulose 5-phosphate reductoisomerase (386 aa).

NADPH contacts are provided by Thr-10, Gly-11, Ser-12, Ile-13, Gly-36, Asn-38, and Asn-122. Position 123 (Lys-123) interacts with 1-deoxy-D-xylulose 5-phosphate. Position 124 (Glu-124) interacts with NADPH. Position 148 (Asp-148) interacts with Mn(2+). Residues Ser-149, Glu-150, Ser-174, and His-197 each contribute to the 1-deoxy-D-xylulose 5-phosphate site. Glu-150 is a binding site for Mn(2+). Position 203 (Gly-203) interacts with NADPH. 1-deoxy-D-xylulose 5-phosphate contacts are provided by Ser-210, Asn-215, Lys-216, and Glu-219. Residue Glu-219 participates in Mn(2+) binding.

It belongs to the DXR family. Requires Mg(2+) as cofactor. It depends on Mn(2+) as a cofactor.

It carries out the reaction 2-C-methyl-D-erythritol 4-phosphate + NADP(+) = 1-deoxy-D-xylulose 5-phosphate + NADPH + H(+). The protein operates within isoprenoid biosynthesis; isopentenyl diphosphate biosynthesis via DXP pathway; isopentenyl diphosphate from 1-deoxy-D-xylulose 5-phosphate: step 1/6. Its function is as follows. Catalyzes the NADPH-dependent rearrangement and reduction of 1-deoxy-D-xylulose-5-phosphate (DXP) to 2-C-methyl-D-erythritol 4-phosphate (MEP). This is 1-deoxy-D-xylulose 5-phosphate reductoisomerase from Geobacter sulfurreducens (strain ATCC 51573 / DSM 12127 / PCA).